A 237-amino-acid polypeptide reads, in one-letter code: Ribonuclease PH (237 aa).

Residues R86 and 124–126 (GTR) contribute to the phosphate site.

Belongs to the RNase PH family. Homohexameric ring arranged as a trimer of dimers.

The enzyme catalyses tRNA(n+1) + phosphate = tRNA(n) + a ribonucleoside 5'-diphosphate. In terms of biological role, phosphorolytic 3'-5' exoribonuclease that plays an important role in tRNA 3'-end maturation. Removes nucleotide residues following the 3'-CCA terminus of tRNAs; can also add nucleotides to the ends of RNA molecules by using nucleoside diphosphates as substrates, but this may not be physiologically important. Probably plays a role in initiation of 16S rRNA degradation (leading to ribosome degradation) during starvation. The chain is Ribonuclease PH from Shewanella sp. (strain W3-18-1).